Here is a 796-residue protein sequence, read N- to C-terminus: U-box domain-containing protein 51 (796 aa).

3 disordered regions span residues 163–195 (DMDT…SSHQ), 218–240 (TNIG…SLDV), and 270–292 (RSSQ…SSSQ). Residues 171-181 (ADDRSESRFSS) are compositionally biased toward basic and acidic residues. A compositionally biased stretch (low complexity) spans 182–195 (DSHSGTVSSTSSHQ). Over residues 270 to 291 (RSSQMEEASSSSTYSDPTSSSS) the composition is skewed to low complexity. Residues 298–407 (ELEKLKIELR…QRLEDALEGG (110 aa)) adopt a coiled-coil conformation. The 272-residue stretch at 429-700 (FSDELKIGVG…DLGKEILPVL (272 aa)) folds into the Protein kinase domain. ATP is bound by residues 435–443 (IGVGGYGSV) and Lys456. Asp557 serves as the catalytic Proton acceptor. In terms of domain architecture, U-box spans 724–796 (NAPTHFYCPI…IKEWRSQLIK (73 aa)).

It belongs to the protein kinase superfamily. Ser/Thr protein kinase family.

It catalyses the reaction L-seryl-[protein] + ATP = O-phospho-L-seryl-[protein] + ADP + H(+). The catalysed reaction is L-threonyl-[protein] + ATP = O-phospho-L-threonyl-[protein] + ADP + H(+). It carries out the reaction S-ubiquitinyl-[E2 ubiquitin-conjugating enzyme]-L-cysteine + [acceptor protein]-L-lysine = [E2 ubiquitin-conjugating enzyme]-L-cysteine + N(6)-ubiquitinyl-[acceptor protein]-L-lysine.. Its pathway is protein modification; protein ubiquitination. Functions as an E3 ubiquitin ligase. In Arabidopsis thaliana (Mouse-ear cress), this protein is U-box domain-containing protein 51 (PUB51).